The primary structure comprises 489 residues: Ribulose bisphosphate carboxylase large chain (489 aa).

Asn128 and Thr178 together coordinate substrate. The Proton acceptor role is filled by Lys180. Lys182 is a substrate binding site. Mg(2+)-binding residues include Lys206, Asp208, and Glu209. Lys206 is subject to N6-carboxylysine. His298 (proton acceptor) is an active-site residue. Substrate is bound by residues Arg299, His331, and Ser383.

This sequence belongs to the RuBisCO large chain family. Type I subfamily. In terms of assembly, heterohexadecamer of 8 large chains and 8 small chains. Requires Mg(2+) as cofactor.

It catalyses the reaction 2 (2R)-3-phosphoglycerate + 2 H(+) = D-ribulose 1,5-bisphosphate + CO2 + H2O. It carries out the reaction D-ribulose 1,5-bisphosphate + O2 = 2-phosphoglycolate + (2R)-3-phosphoglycerate + 2 H(+). Functionally, ruBisCO catalyzes two reactions: the carboxylation of D-ribulose 1,5-bisphosphate, the primary event in carbon dioxide fixation, as well as the oxidative fragmentation of the pentose substrate. Both reactions occur simultaneously and in competition at the same active site. This chain is Ribulose bisphosphate carboxylase large chain, found in Nitrosospira multiformis (strain ATCC 25196 / NCIMB 11849 / C 71).